A 96-amino-acid polypeptide reads, in one-letter code: Aspartyl/glutamyl-tRNA(Asn/Gln) amidotransferase subunit C (96 aa).

Positions 64–96 are disordered; sequence REDEPEPGLPREEVLKNAPDQQDGQFRVPAILE.

Belongs to the GatC family. As to quaternary structure, heterotrimer of A, B and C subunits.

It catalyses the reaction L-glutamyl-tRNA(Gln) + L-glutamine + ATP + H2O = L-glutaminyl-tRNA(Gln) + L-glutamate + ADP + phosphate + H(+). The catalysed reaction is L-aspartyl-tRNA(Asn) + L-glutamine + ATP + H2O = L-asparaginyl-tRNA(Asn) + L-glutamate + ADP + phosphate + 2 H(+). Functionally, allows the formation of correctly charged Asn-tRNA(Asn) or Gln-tRNA(Gln) through the transamidation of misacylated Asp-tRNA(Asn) or Glu-tRNA(Gln) in organisms which lack either or both of asparaginyl-tRNA or glutaminyl-tRNA synthetases. The reaction takes place in the presence of glutamine and ATP through an activated phospho-Asp-tRNA(Asn) or phospho-Glu-tRNA(Gln). This chain is Aspartyl/glutamyl-tRNA(Asn/Gln) amidotransferase subunit C, found in Geobacillus thermodenitrificans (strain NG80-2).